The chain runs to 117 residues: Large ribosomal subunit protein eL18 (117 aa).

It belongs to the eukaryotic ribosomal protein eL18 family.

This Halobacterium salinarum (strain ATCC 29341 / DSM 671 / R1) protein is Large ribosomal subunit protein eL18.